We begin with the raw amino-acid sequence, 98 residues long: Large ribosomal subunit protein uL23 (98 aa).

Belongs to the universal ribosomal protein uL23 family. Part of the 50S ribosomal subunit. Contacts protein L29, and trigger factor when it is bound to the ribosome.

One of the early assembly proteins it binds 23S rRNA. One of the proteins that surrounds the polypeptide exit tunnel on the outside of the ribosome. Forms the main docking site for trigger factor binding to the ribosome. The protein is Large ribosomal subunit protein uL23 of Hydrogenovibrio crunogenus (strain DSM 25203 / XCL-2) (Thiomicrospira crunogena).